The following is a 104-amino-acid chain: ATP-dependent Clp protease adapter protein ClpS (104 aa).

This sequence belongs to the ClpS family. In terms of assembly, binds to the N-terminal domain of the chaperone ClpA.

In terms of biological role, involved in the modulation of the specificity of the ClpAP-mediated ATP-dependent protein degradation. This Burkholderia ambifaria (strain MC40-6) protein is ATP-dependent Clp protease adapter protein ClpS.